A 250-amino-acid chain; its full sequence is Ribosomal RNA small subunit methyltransferase J (250 aa).

Residues 101-102, 117-118, 153-154, and D171 contribute to the S-adenosyl-L-methionine site; these read RD, ER, and SS.

Belongs to the methyltransferase superfamily. RsmJ family.

The protein resides in the cytoplasm. The catalysed reaction is guanosine(1516) in 16S rRNA + S-adenosyl-L-methionine = N(2)-methylguanosine(1516) in 16S rRNA + S-adenosyl-L-homocysteine + H(+). In terms of biological role, specifically methylates the guanosine in position 1516 of 16S rRNA. This Escherichia coli (strain UTI89 / UPEC) protein is Ribosomal RNA small subunit methyltransferase J.